A 304-amino-acid chain; its full sequence is Aspartate carbamoyltransferase catalytic subunit (304 aa).

Arg-49 and Thr-50 together coordinate carbamoyl phosphate. An L-aspartate-binding site is contributed by Lys-77. Residues Arg-99, His-127, and Gln-130 each contribute to the carbamoyl phosphate site. Residues Arg-160 and Arg-211 each contribute to the L-aspartate site. Positions 252 and 253 each coordinate carbamoyl phosphate.

This sequence belongs to the aspartate/ornithine carbamoyltransferase superfamily. ATCase family. Heterododecamer (2C3:3R2) of six catalytic PyrB chains organized as two trimers (C3), and six regulatory PyrI chains organized as three dimers (R2).

The catalysed reaction is carbamoyl phosphate + L-aspartate = N-carbamoyl-L-aspartate + phosphate + H(+). Its pathway is pyrimidine metabolism; UMP biosynthesis via de novo pathway; (S)-dihydroorotate from bicarbonate: step 2/3. Catalyzes the condensation of carbamoyl phosphate and aspartate to form carbamoyl aspartate and inorganic phosphate, the committed step in the de novo pyrimidine nucleotide biosynthesis pathway. In Bacillus cereus (strain G9842), this protein is Aspartate carbamoyltransferase catalytic subunit.